The chain runs to 800 residues: Protein MICRORCHIDIA 4 (800 aa).

2 disordered regions span residues 1-76 (MEPI…ARSD) and 552-702 (AKRQ…RTLS). Polar residues predominate over residues 9–18 (NPVTTSTLST). A compositionally biased stretch (low complexity) spans 36-47 (ELSSSNEGSELG). Basic and acidic residues-rich tracts occupy residues 559-578 (SAKDTEKDTEDRESSPEFDP) and 628-641 (VSKDIGYKSSEKGG). The segment covering 666–675 (NSDDDYDCDS) has biased composition (acidic residues). Residues 699 to 766 (RTLSQLEQEN…QASLIDVFAE (68 aa)) adopt a coiled-coil conformation. Short sequence motifs (nuclear localization signal) lie at residues 716 to 723 (DKKEEVFL) and 735 to 742 (LRKTLEAE).

The protein belongs to the MORC ATPase protein family. As to quaternary structure, homodimer and heterodimer. Component of an RNA-directed DNA methylation (RdDM) complex. Forms homomeric complexes. The cofactor is Mg(2+). Requires Mn(2+) as cofactor.

It localises to the nucleus. In terms of biological role, exhibits ATPase activity. Binds DNA/RNA in a non-specific manner and exhibits endonuclease activity. Probably involved in DNA repair. Involved in RNA-directed DNA methylation (RdDM) as a component of the RdDM machinery and required for gene silencing. May also be involved in the regulation of chromatin architecture to maintain gene silencing. Together with MORC7, acts to suppress a wide set of non-methylated protein-coding genes, especially involved in pathogen response. Positive regulator of defense against the oomycete Hyaloperonospora arabidopsidis (Hpa). This Arabidopsis thaliana (Mouse-ear cress) protein is Protein MICRORCHIDIA 4.